The sequence spans 114 residues: Gonadotropin subunit beta-1 (114 aa).

The signal sequence occupies residues 1–19 (MQLVLMAAVLALAEVGCFG). Cystine bridges form between cysteine 20–cysteine 66, cysteine 32–cysteine 80, cysteine 37–cysteine 114, cysteine 43–cysteine 92, cysteine 47–cysteine 94, and cysteine 97–cysteine 104. N-linked (GlcNAc...) asparagine glycosylation occurs at asparagine 24.

The protein belongs to the glycoprotein hormones subunit beta family. Heterodimer of an alpha and a beta chain.

It localises to the secreted. Functionally, involved in gametogenesis and steroidogenesis. In Fundulus heteroclitus (Killifish), this protein is Gonadotropin subunit beta-1 (cgba).